The following is a 2155-amino-acid chain: Polyketide synthase 2 (2155 aa).

The interval 7-244 (FIFGDQTGGF…IPIPIWAPYH (238 aa)) is N-terminal acylcarrier protein transacylase domain (SAT). Residues 374-807 (DSKIAIIGMS…GGNSALLLED (434 aa)) enclose the Ketosynthase family 3 (KS3) domain. Active-site for beta-ketoacyl synthase activity residues include Cys546, His681, and His723. Residues 908 to 1213 (GFVFSGQGAQ…ASLHRKDDGW (306 aa)) form a malonyl-CoA:ACP transacylase (MAT) domain region. Ser998 acts as the For acyl/malonyl transferase activity in catalysis. A product template (PT) domain region spans residues 1290-1605 (TSSVQRIIRQ…RSLLNKVLPP (316 aa)). The N-terminal hotdog fold stretch occupies residues 1294–1428 (QRIIRQTDGP…CLLRFADPTS (135 aa)). Residues 1294 to 1600 (QRIIRQTDGP…FLGMSRSLLN (307 aa)) form the PKS/mFAS DH domain. His1327 functions as the Proton acceptor; for dehydratase activity in the catalytic mechanism. The interval 1455-1600 (TDSLLSKGIV…FLGMSRSLLN (146 aa)) is C-terminal hotdog fold. Residue Asp1514 is the Proton donor; for dehydratase activity of the active site. The interval 1626-1654 (AASAKDTERRPLDIPTRAQRQPSSPQTGT) is disordered. A compositionally biased stretch (polar residues) spans 1643–1654 (AQRQPSSPQTGT). The Carrier 1 domain occupies 1649–1726 (SPQTGTMGRI…ELKAFLGADQ (78 aa)). Ser1686 is subject to O-(pantetheine 4'-phosphoryl)serine. The interval 1735–1765 (SSIGQHTPQTSDKGSGTLASQKTDGDTGPDT) is disordered. Positions 1736–1756 (SIGQHTPQTSDKGSGTLASQK) are enriched in polar residues. One can recognise a Carrier 2 domain in the interval 1764 to 1838 (DTTLNRVCAI…ALQKALCGSE (75 aa)). Residue Ser1798 is modified to O-(pantetheine 4'-phosphoryl)serine. Residues 1873-2149 (ASPPHATSIL…MVEMGNLIGD (277 aa)) are thioesterase (TE) domain. Ser1979 serves as the catalytic For thioesterase activity.

In terms of biological role, polyketide synthase; part of the Pks2 gene cluster that mediates the formation of infectious structures (appressoria), enabling these fungi to kill insects faster. The product of the Pks2 gene cluster is different from the one of Pks1 and has still not been identified. This Metarhizium anisopliae (strain ARSEF 549) protein is Polyketide synthase 2.